The primary structure comprises 1198 residues: Structural polyprotein (1198 aa).

The tract at residues 2–15 (TKKPGGPGKNRAIN) is interaction with host EXOC1. Residues 37–72 (LLDGRGPVRFVLALITFFKFTALAPTKALLGRWKAV) are hydrophobic; homodimerization of capsid protein C. A propeptide spans 106–127 (GGNEGSIMWLASLAVVIACAGA) (ER anchor for the capsid protein C, removed in mature form by serine protease NS3). The chain crosses the membrane as a helical span at residues 110-130 (GSIMWLASLAVVIACAGAMKL). Residue asparagine 142 is glycosylated (N-linked (GlcNAc...) asparagine; by host). 2 helical membrane-spanning segments follow: residues 254–274 (WIIR…MLGS) and 280–294 (VVFT…PAYS). Disulfide bonds link cysteine 297-cysteine 324, cysteine 354-cysteine 410, cysteine 354-cysteine 415, cysteine 368-cysteine 399, cysteine 386-cysteine 410, and cysteine 386-cysteine 415. Positions 392-405 (DRGWGNGCGLFGKG) are fusion peptide. The N-linked (GlcNAc...) asparagine; by host glycan is linked to asparagine 448. Intrachain disulfides connect cysteine 484–cysteine 581 and cysteine 598–cysteine 629. 2 consecutive transmembrane segments (helical) span residues 747-767 (FGGM…WMGV) and 774-794 (IALA…NVHA). Cystine bridges form between cysteine 798/cysteine 809, cysteine 849/cysteine 937, cysteine 973/cysteine 1017, cysteine 1074/cysteine 1123, cysteine 1085/cysteine 1106, and cysteine 1107/cysteine 1110. Asparagine 924 and asparagine 1001 each carry an N-linked (GlcNAc...) asparagine; by host glycan. The interval 1151-1177 (MVDPFSAGPSGDVSGHPGSPSQEVDGQ) is disordered.

As to quaternary structure, homodimer. Interacts (via N-terminus) with host EXOC1 (via C-terminus); this interaction results in EXOC1 degradation through the proteasome degradation pathway. Interacts with host CAPRIN1; this interaction is involved in the suppression of the integrated stress response. Forms heterodimers with envelope protein E in the endoplasmic reticulum and Golgi. In terms of assembly, homodimer; in the endoplasmic reticulum and Golgi. Interacts with protein prM. Interacts with non-structural protein 1. Post-translationally, genome polyprotein: Specific enzymatic cleavages in vivo yield mature proteins. Cleavages in the lumen of endoplasmic reticulum are performed by host signal peptidase, whereas cleavages in the cytoplasmic side are performed by serine protease NS3. Signal cleavage at the 2K-4B site requires a prior NS3 protease-mediated cleavage at the 4A-2K site. In terms of processing, cleaved in post-Golgi vesicles by a host furin, releasing the mature small envelope protein M, and peptide pr. This cleavage is incomplete as up to 30% of viral particles still carry uncleaved prM. N-glycosylated.

The protein resides in the secreted. Its subcellular location is the virion membrane. The protein localises to the host endoplasmic reticulum membrane. Plays a role in virus budding by binding to the cell membrane and gathering the viral RNA into a nucleocapsid that forms the core of a mature virus particle. During virus entry, may induce genome penetration into the host cytoplasm after hemifusion induced by the surface proteins. Can migrate to the cell nucleus where it modulates host functions. Overcomes the anti-viral effects of host EXOC1 by sequestering and degrading the latter through the proteasome degradation pathway. Inhibits the integrated stress response (ISR) in the infected cell by binding to host CAPRIN1. Its function is as follows. Inhibits RNA silencing by interfering with host Dicer. Functionally, prevents premature fusion activity of envelope proteins in trans-Golgi by binding to envelope protein E at pH6.0. After virion release in extracellular space, gets dissociated from E dimers. In terms of biological role, acts as a chaperone for envelope protein E during intracellular virion assembly by masking and inactivating envelope protein E fusion peptide. prM is the only viral peptide matured by host furin in the trans-Golgi network probably to avoid catastrophic activation of the viral fusion activity in acidic Golgi compartment prior to virion release. prM-E cleavage is inefficient, and many virions are only partially matured. These uncleaved prM would play a role in immune evasion. May play a role in virus budding. Exerts cytotoxic effects by activating a mitochondrial apoptotic pathway through M ectodomain. May display a viroporin activity. Its function is as follows. Binds to host cell surface receptor and mediates fusion between viral and cellular membranes. Envelope protein is synthesized in the endoplasmic reticulum in the form of heterodimer with protein prM. They play a role in virion budding in the ER, and the newly formed immature particle is covered with 60 spikes composed of heterodimer between precursor prM and envelope protein E. The virion is transported to the Golgi apparatus where the low pH causes dissociation of PrM-E heterodimers and formation of E homodimers. prM-E cleavage is inefficient, and many virions are only partially matured. These uncleaved prM would play a role in immune evasion. Functionally, may play a role in neuroinvasiveness. The protein is Structural polyprotein of Ardeidae (herons).